A 459-amino-acid polypeptide reads, in one-letter code: Cysteine--tRNA ligase (459 aa).

C31 provides a ligand contact to Zn(2+). The 'HIGH' region signature appears at 33 to 43 (PTVYYNPHIGN). Zn(2+)-binding residues include C216, H241, and E245. The 'KMSKS' region motif lies at 274-278 (KMSKS). Residue K277 coordinates ATP.

Belongs to the class-I aminoacyl-tRNA synthetase family. Monomer. The cofactor is Zn(2+).

It is found in the cytoplasm. It catalyses the reaction tRNA(Cys) + L-cysteine + ATP = L-cysteinyl-tRNA(Cys) + AMP + diphosphate. This chain is Cysteine--tRNA ligase, found in Rickettsia rickettsii (strain Iowa).